We begin with the raw amino-acid sequence, 188 residues long: Elongation factor P (188 aa).

This sequence belongs to the elongation factor P family.

It localises to the cytoplasm. The protein operates within protein biosynthesis; polypeptide chain elongation. Involved in peptide bond synthesis. Stimulates efficient translation and peptide-bond synthesis on native or reconstituted 70S ribosomes in vitro. Probably functions indirectly by altering the affinity of the ribosome for aminoacyl-tRNA, thus increasing their reactivity as acceptors for peptidyl transferase. This chain is Elongation factor P, found in Bradyrhizobium diazoefficiens (strain JCM 10833 / BCRC 13528 / IAM 13628 / NBRC 14792 / USDA 110).